Consider the following 462-residue polypeptide: Fumarate hydratase class II (462 aa).

Residues 97 to 99, 127 to 130, 137 to 139, and threonine 185 each bind substrate; these read SGT, HPND, and SSN. Catalysis depends on histidine 186, which acts as the Proton donor/acceptor. The active site involves serine 316. Substrate is bound by residues serine 317 and 322–324; that span reads KVN.

This sequence belongs to the class-II fumarase/aspartase family. Fumarase subfamily. As to quaternary structure, homotetramer.

The protein resides in the cytoplasm. It catalyses the reaction (S)-malate = fumarate + H2O. Its pathway is carbohydrate metabolism; tricarboxylic acid cycle; (S)-malate from fumarate: step 1/1. Its function is as follows. Involved in the TCA cycle. Catalyzes the stereospecific interconversion of fumarate to L-malate. This chain is Fumarate hydratase class II, found in Bacillus anthracis.